The following is a 229-amino-acid chain: Heptaprenylglyceryl phosphate synthase (229 aa).

Lysine 12 lines the sn-glycerol 1-phosphate pocket. Residues aspartate 14 and serine 40 each contribute to the Mg(2+) site. Sn-glycerol 1-phosphate contacts are provided by residues 159–164, glycine 189, and 209–210; these read YLEYSG and GN.

This sequence belongs to the GGGP/HepGP synthase family. Group I subfamily. Homodimer. The cofactor is Mg(2+).

The enzyme catalyses sn-glycerol 1-phosphate + all-trans-heptaprenyl diphosphate = 3-heptaprenyl-sn-glycero-1-phosphate + diphosphate. It functions in the pathway membrane lipid metabolism; glycerophospholipid metabolism. Prenyltransferase that catalyzes in vivo the transfer of the heptaprenyl moiety of heptaprenyl pyrophosphate (HepPP; 35 carbon atoms) to the C3 hydroxyl of sn-glycerol-1-phosphate (G1P), producing heptaprenylglyceryl phosphate (HepGP). This reaction is an ether-bond-formation step in the biosynthesis of archaea-type G1P-based membrane lipids found in Bacillales. The sequence is that of Heptaprenylglyceryl phosphate synthase from Bacillus cereus (strain ZK / E33L).